We begin with the raw amino-acid sequence, 228 residues long: L-ribulose-5-phosphate 4-epimerase UlaF (228 aa).

Substrate is bound by residues 26 to 27, 43 to 44, and 72 to 73; these read GN, SG, and SS. Zn(2+) is bound by residues D74, H93, and H95. Residue D118 is the Proton donor/acceptor of the active site. Zn(2+) is bound at residue H167. The active-site Proton donor/acceptor is Y225.

Belongs to the aldolase class II family. AraD/FucA subfamily. It depends on Zn(2+) as a cofactor.

It carries out the reaction L-ribulose 5-phosphate = D-xylulose 5-phosphate. It participates in cofactor degradation; L-ascorbate degradation; D-xylulose 5-phosphate from L-ascorbate: step 4/4. In terms of biological role, catalyzes the isomerization of L-ribulose 5-phosphate to D-xylulose 5-phosphate. Is involved in the anaerobic L-ascorbate utilization. The polypeptide is L-ribulose-5-phosphate 4-epimerase UlaF (Escherichia coli O6:K15:H31 (strain 536 / UPEC)).